A 318-amino-acid polypeptide reads, in one-letter code: Olfactory receptor 5M5 (318 aa).

Over 1–31 (MLAPKKMVRGNYSMVTEFILLGLTDRPELQP) the chain is Extracellular. Asn11 carries an N-linked (GlcNAc...) asparagine glycan. The helical transmembrane segment at 32–52 (LLFVLFLVIYLITVGGNLGMM) threads the bilayer. Over 53–60 (VLIRIDSR) the chain is Cytoplasmic. Residues 61–81 (LHTPMYYFLASLSCLDLCYST) traverse the membrane as a helical segment. Residues 82-105 (NVTPKMLVNFLSEKKTISYAACLV) are Extracellular-facing. Cysteines 103 and 195 form a disulfide. The helical transmembrane segment at 106–126 (QCYFFIAMVITEYYMLAVMAY) threads the bilayer. Residues 127-139 (DRYMAICNPLLYS) lie on the Cytoplasmic side of the membrane. A helical membrane pass occupies residues 140-160 (SKMSKGVCVRLIAGPYIYGFL). The Extracellular portion of the chain corresponds to 161–202 (SGLMETMWTYRLTFCGSNIINHFYCADPPLIRLSCSDTFIKE). The chain crosses the membrane as a helical span at residues 203–223 (TSMFVVAGFNLSNSLFIILIS). Residues 224-243 (YLFILIAILRMRSAEGRRKA) lie on the Cytoplasmic side of the membrane. A helical membrane pass occupies residues 244 to 264 (FSTCGSHLVAVTVFYGTLFCM). The Extracellular segment spans residues 265–277 (YVRPPTDKSVEQS). A helical transmembrane segment spans residues 278–298 (KIIAVFYTFVSPMLNPIIYSL). At 299 to 318 (RNKDVKHAFWKLVRRNVLSK) the chain is on the cytoplasmic side.

The protein belongs to the G-protein coupled receptor 1 family.

The protein resides in the cell membrane. Potential odorant receptor. This is Olfactory receptor 5M5 from Mus musculus (Mouse).